Reading from the N-terminus, the 233-residue chain is DNA repair protein RecO (233 aa).

It belongs to the RecO family.

Involved in DNA repair and RecF pathway recombination. The sequence is that of DNA repair protein RecO from Pseudomonas paraeruginosa (strain DSM 24068 / PA7) (Pseudomonas aeruginosa (strain PA7)).